The primary structure comprises 362 residues: Cobalt-precorrin-5B C(1)-methyltransferase (362 aa).

This sequence belongs to the CbiD family.

The catalysed reaction is Co-precorrin-5B + S-adenosyl-L-methionine = Co-precorrin-6A + S-adenosyl-L-homocysteine. It functions in the pathway cofactor biosynthesis; adenosylcobalamin biosynthesis; cob(II)yrinate a,c-diamide from sirohydrochlorin (anaerobic route): step 6/10. Its function is as follows. Catalyzes the methylation of C-1 in cobalt-precorrin-5B to form cobalt-precorrin-6A. The sequence is that of Cobalt-precorrin-5B C(1)-methyltransferase from Burkholderia lata (strain ATCC 17760 / DSM 23089 / LMG 22485 / NCIMB 9086 / R18194 / 383).